The primary structure comprises 300 residues: L-threonine kinase (300 aa).

92-102 lines the ATP pocket; the sequence is PVAKGMASSTA.

The protein belongs to the GHMP kinase family. PduX subfamily.

It localises to the cytoplasm. The enzyme catalyses L-threonine + ATP = O-phospho-L-threonine + ADP + H(+). The protein operates within cofactor biosynthesis; adenosylcobalamin biosynthesis. It participates in polyol metabolism; 1,2-propanediol degradation. L-threonine kinase that catalyzes the conversion of L-threonine to L-threonine-O-3-phosphate. Involved in the de novo synthesis of adenosylcobalamin (coenzyme B12) and the assimilation of cobyric acid. Uses ATP; the activity with CTP, GTP or UTP is 6, 11, and 3% of the activity with ATP, respectively. In terms of biological role, the 1,2-propanediol (1,2-PD)-specific bacterial microcompartment (BMC) concentrates low levels of 1,2-PD catabolic enzymes, concentrates volatile reaction intermediates thus enhancing pathway flux and keeps the level of toxic, mutagenic propionaldehyde low. This gene probably benefits from its induction via the Pdu promoter, rather than a physical interaction with the BMC. The sequence is that of L-threonine kinase from Salmonella typhimurium (strain LT2 / SGSC1412 / ATCC 700720).